The following is a 427-amino-acid chain: Trigger factor (427 aa).

Residues 163–248 (GDTVVIDFVG…VNEVKAKELP (86 aa)) form the PPIase FKBP-type domain.

It belongs to the FKBP-type PPIase family. Tig subfamily.

The protein localises to the cytoplasm. It catalyses the reaction [protein]-peptidylproline (omega=180) = [protein]-peptidylproline (omega=0). Functionally, involved in protein export. Acts as a chaperone by maintaining the newly synthesized protein in an open conformation. Functions as a peptidyl-prolyl cis-trans isomerase. The polypeptide is Trigger factor (Lactococcus lactis subsp. cremoris (strain SK11)).